The chain runs to 435 residues: UDP-N-acetylmuramate--L-alanine ligase (435 aa).

108 to 114 lines the ATP pocket; that stretch reads GSHGKTS.

Belongs to the MurCDEF family.

Its subcellular location is the cytoplasm. The enzyme catalyses UDP-N-acetyl-alpha-D-muramate + L-alanine + ATP = UDP-N-acetyl-alpha-D-muramoyl-L-alanine + ADP + phosphate + H(+). It functions in the pathway cell wall biogenesis; peptidoglycan biosynthesis. In terms of biological role, cell wall formation. This is UDP-N-acetylmuramate--L-alanine ligase from Shouchella clausii (strain KSM-K16) (Alkalihalobacillus clausii).